The primary structure comprises 407 residues: uncharacterized protein (407 aa).

Coiled coils occupy residues 96–130 and 287–345; these read TDSIEYEDEKLNELEKTRKEHTDKVKLMQQQFKNE and MKCY…AKTS. Residues 302 to 317 show a composition bias toward basic and acidic residues; the sequence is EKRKDNLQKQNEEAAK. The tract at residues 302–394 is disordered; it reads EKRKDNLQKQ…NMDPAINESD (93 aa). Basic residues predominate over residues 318–331; it reads ITKRKNRQEKRREK. Positions 344–370 are enriched in low complexity; it reads TSVSSIPDTSSTTTSTNSTPTNTKSNS.

This is an uncharacterized protein from Acanthamoeba polyphaga (Amoeba).